The chain runs to 147 residues: MRTTYMAKPGEIDRKWYVVDATDVPLGRLSTVVASILRGKNKPTFTPNVDTGDNVIVINASKVALTGKKAERKIYYHHTAYAGGLKERTAGDFLAKEPTKLIETSVKGMLPHNSLGHKMGLKLHVYAGAEHTQQAQKPEVLDITNLI.

It belongs to the universal ribosomal protein uL13 family. Part of the 50S ribosomal subunit.

Functionally, this protein is one of the early assembly proteins of the 50S ribosomal subunit, although it is not seen to bind rRNA by itself. It is important during the early stages of 50S assembly. The polypeptide is Large ribosomal subunit protein uL13 (Lactiplantibacillus plantarum (strain ATCC BAA-793 / NCIMB 8826 / WCFS1) (Lactobacillus plantarum)).